Reading from the N-terminus, the 607-residue chain is Phosphoenolpyruvate carboxykinase [GTP] (607 aa).

Substrate-binding positions include arginine 81 and 221–223 (YGG). Residues lysine 230 and histidine 250 each coordinate Mn(2+). Substrate is bound at residue serine 272. 273–278 (ACGKTN) is a binding site for GTP. The active site involves cysteine 274. A Mn(2+)-binding site is contributed by aspartate 297. 388 to 390 (NSR) contributes to the substrate binding site. Residues arginine 390, arginine 421, and 516-519 (FGDN) each bind GTP.

It belongs to the phosphoenolpyruvate carboxykinase [GTP] family. As to quaternary structure, monomer. Mn(2+) serves as cofactor.

It localises to the cytoplasm. It catalyses the reaction oxaloacetate + GTP = phosphoenolpyruvate + GDP + CO2. It functions in the pathway carbohydrate biosynthesis; gluconeogenesis. Functionally, catalyzes the conversion of oxaloacetate (OAA) to phosphoenolpyruvate (PEP), the rate-limiting step in the metabolic pathway that produces glucose from lactate and other precursors derived from the citric acid cycle. The protein is Phosphoenolpyruvate carboxykinase [GTP] of Renibacterium salmoninarum (strain ATCC 33209 / DSM 20767 / JCM 11484 / NBRC 15589 / NCIMB 2235).